A 1060-amino-acid chain; its full sequence is RNA-binding protein 27 (1060 aa).

Composition is skewed to basic and acidic residues over residues 91 to 102 and 124 to 143; these read LVQEKEEIKEEV and TRSESSERRTREKKREDGKW. Disordered stretches follow at residues 91 to 143 and 162 to 235; these read LVQE…DGKW and WRRG…GAQS. The segment covering 165-185 has biased composition (basic residues); that stretch reads GRSKSRSKSRGLSRSRSRSRG. The span at 186–211 shows a compositional bias: basic and acidic residues; that stretch reads RSKDRDPNRNVEHRERSKFKSERNDL. Residues 225-235 are compositionally biased toward polar residues; that stretch reads SSEQYSSGAQS. The C3H1-type zinc-finger motif lies at 273-301; that stretch reads LPPKRRCRDYDERGFCVLGDLCQFDHGND. Pro residues-rich tracts occupy residues 319-356 and 371-384; these read PPPGLPPPPPPGMLMPPMPGPGPGPGPGPGPGPGPGPG and QPPPSVVLPIPRPP. Positions 319 to 412 are disordered; the sequence is PPPGLPPPPP…PNLASVGTRL (94 aa). The segment covering 386–402 has biased composition (polar residues); sequence TQSSLINSRDQPGTSAV. Position 447 is a phosphothreonine (threonine 447). The residue at position 455 (arginine 455) is an Omega-N-methylarginine. The interval 565-592 is disordered; that stretch reads MSGLEGPLTKKPWLGKQGNNNQNKPGFL. Over residues 579 to 588 the composition is skewed to low complexity; that stretch reads GKQGNNNQNK. The RRM domain maps to 600 to 674; it reads TKLEVKKIPQ…RFIRVLWHRE (75 aa). The stretch at 809–886 forms a coiled coil; it reads VQEVLKKKQE…KDELKTSSAV (78 aa). The residue at position 927 (serine 927) is a Phosphoserine. Disordered regions lie at residues 940-968 and 1006-1060; these read PVGRGKTMSSQGRGRGRGRGGRGRGSLNH and DRRL…SWRR. Residues serine 1012 and serine 1020 each carry the phosphoserine modification. The segment covering 1024–1053 has biased composition (acidic residues); the sequence is ETEEEEVKEEETETSDLFLPDDDDEDEDEY.

Its subcellular location is the cytoplasm. The protein localises to the nucleus speckle. Functionally, may be involved in the turnover of nuclear polyadenylated (pA+) RNA. This chain is RNA-binding protein 27, found in Homo sapiens (Human).